Here is a 407-residue protein sequence, read N- to C-terminus: Myeloid cell nuclear differentiation antigen (407 aa).

Residues 1-88 form the Pyrin domain; it reads MVNEYKKILL…VNNLRKEKSK (88 aa). The segment at 108–207 is disordered; the sequence is EVGLAAPAPT…RQVDARRNVP (100 aa). The Nuclear localization signal motif lies at 131 to 137; that stretch reads PVAQKRK. Positions 139–148 are enriched in basic and acidic residues; sequence PNKEKTEAKR. Residues 177–190 are compositionally biased toward low complexity; sequence QTSSSTPSNTSFTP. Residues 196-394 form the HIN-200 domain; that stretch reads AQRQVDARRN…CGSHSFIKVI (199 aa).

In terms of assembly, participates in a ternary complex with YY1 and the YY1 target DNA element. Binds nucleolin and nucleophosmin/NPM/B23. In terms of tissue distribution, expressed constitutively in cells of the myeloid lineage. Found in promyelocyte stage cells as well as in all other stage cells including peripheral blood monocytes and granulocytes. Also appears in myeloblast cells in some cases of acute myeloid Leukemia.

The protein localises to the nucleus. Its subcellular location is the cytoplasm. In terms of biological role, may act as a transcriptional activator/repressor in the myeloid lineage. Plays a role in the granulocyte/monocyte cell-specific response to interferon. Stimulates the DNA binding of the transcriptional repressor protein YY1. The chain is Myeloid cell nuclear differentiation antigen (MNDA) from Homo sapiens (Human).